A 404-amino-acid polypeptide reads, in one-letter code: Sodium/glutamate symporter (404 aa).

11 helical membrane-spanning segments follow: residues 5–25 (FSTY…YFLV), 33–53 (TFNI…LLIW), 69–89 (TTMM…SRLI), 95–115 (LVVF…IGIA), 161–181 (IAIA…GPVA), 219–239 (SLIE…YLDV), 245–265 (ALQL…RNIL), 277–297 (AIDV…LMSL), 307–327 (IDVL…AIFI), 338–358 (AVVL…TAIA), and 373–393 (AFLI…AALL).

This sequence belongs to the glutamate:Na(+) symporter (ESS) (TC 2.A.27) family.

It localises to the cell inner membrane. Functionally, catalyzes the sodium-dependent transport of glutamate. In Haemophilus influenzae (strain ATCC 51907 / DSM 11121 / KW20 / Rd), this protein is Sodium/glutamate symporter.